We begin with the raw amino-acid sequence, 261 residues long: tRNA pseudouridine synthase A (261 aa).

Catalysis depends on aspartate 51, which acts as the Nucleophile. Tyrosine 109 contributes to the substrate binding site.

The protein belongs to the tRNA pseudouridine synthase TruA family. As to quaternary structure, homodimer.

The enzyme catalyses uridine(38/39/40) in tRNA = pseudouridine(38/39/40) in tRNA. Functionally, formation of pseudouridine at positions 38, 39 and 40 in the anticodon stem and loop of transfer RNAs. The chain is tRNA pseudouridine synthase A from Tolumonas auensis (strain DSM 9187 / NBRC 110442 / TA 4).